The primary structure comprises 304 residues: Virulence protein VirA (304 aa).

In terms of biological role, could be involved in the biosynthesis of a major surface antigen important for virulence. This Vibrio anguillarum (strain ATCC 68554 / 775) (Listonella anguillarum) protein is Virulence protein VirA (virA).